The following is a 728-amino-acid chain: UvrABC system protein C (728 aa).

One can recognise a GIY-YIG domain in the interval 16 to 95 (DSPGVYRFRD…IKEYDPRFNV (80 aa)). The 36-residue stretch at 208–243 (GTYLRRLERQMAEAAEEMEYERAARLRDDIGALKKA) folds into the UVR domain. Disordered stretches follow at residues 473–535 (ADGE…GRPK) and 689–728 (VNTA…GQER). A compositionally biased stretch (low complexity) spans 487-505 (GDAAPNGDAAPNDGAAPDD).

This sequence belongs to the UvrC family. In terms of assembly, interacts with UvrB in an incision complex.

The protein resides in the cytoplasm. Functionally, the UvrABC repair system catalyzes the recognition and processing of DNA lesions. UvrC both incises the 5' and 3' sides of the lesion. The N-terminal half is responsible for the 3' incision and the C-terminal half is responsible for the 5' incision. This Streptomyces coelicolor (strain ATCC BAA-471 / A3(2) / M145) protein is UvrABC system protein C.